A 283-amino-acid polypeptide reads, in one-letter code: Probable protein phosphatase 2C 17 (283 aa).

A PPM-type phosphatase domain is found at 32–282 (KYGFSLIKGK…DDISCIVVRF (251 aa)). The Mn(2+) site is built by Asp69, Gly70, Asp234, and Asp273.

The protein belongs to the PP2C family. Requires Mg(2+) as cofactor. Mn(2+) is required as a cofactor.

It carries out the reaction O-phospho-L-seryl-[protein] + H2O = L-seryl-[protein] + phosphate. It catalyses the reaction O-phospho-L-threonyl-[protein] + H2O = L-threonyl-[protein] + phosphate. The polypeptide is Probable protein phosphatase 2C 17 (Arabidopsis thaliana (Mouse-ear cress)).